Here is a 78-residue protein sequence, read N- to C-terminus: Small ribosomal subunit protein bS20 (78 aa).

The protein belongs to the bacterial ribosomal protein bS20 family.

Functionally, binds directly to 16S ribosomal RNA. The sequence is that of Small ribosomal subunit protein bS20 from Streptococcus pneumoniae serotype 4 (strain ATCC BAA-334 / TIGR4).